Here is a 478-residue protein sequence, read N- to C-terminus: ATP synthase subunit beta (478 aa).

160–167 provides a ligand contact to ATP; it reads GGAGVGKT.

The protein belongs to the ATPase alpha/beta chains family. F-type ATPases have 2 components, CF(1) - the catalytic core - and CF(0) - the membrane proton channel. CF(1) has five subunits: alpha(3), beta(3), gamma(1), delta(1), epsilon(1). CF(0) has three main subunits: a(1), b(2) and c(9-12). The alpha and beta chains form an alternating ring which encloses part of the gamma chain. CF(1) is attached to CF(0) by a central stalk formed by the gamma and epsilon chains, while a peripheral stalk is formed by the delta and b chains.

Its subcellular location is the cell inner membrane. The enzyme catalyses ATP + H2O + 4 H(+)(in) = ADP + phosphate + 5 H(+)(out). In terms of biological role, produces ATP from ADP in the presence of a proton gradient across the membrane. The catalytic sites are hosted primarily by the beta subunits. In Orientia tsutsugamushi (strain Boryong) (Rickettsia tsutsugamushi), this protein is ATP synthase subunit beta.